We begin with the raw amino-acid sequence, 159 residues long: Cyclic pyranopterin monophosphate synthase (159 aa).

Substrate-binding positions include 75-77 and 113-114; these read LCH and ME. Residue Asp-128 is part of the active site.

The protein belongs to the MoaC family. Homohexamer; trimer of dimers.

It carries out the reaction (8S)-3',8-cyclo-7,8-dihydroguanosine 5'-triphosphate = cyclic pyranopterin phosphate + diphosphate. It functions in the pathway cofactor biosynthesis; molybdopterin biosynthesis. Its function is as follows. Catalyzes the conversion of (8S)-3',8-cyclo-7,8-dihydroguanosine 5'-triphosphate to cyclic pyranopterin monophosphate (cPMP). This is Cyclic pyranopterin monophosphate synthase from Cereibacter sphaeroides (strain ATCC 17029 / ATH 2.4.9) (Rhodobacter sphaeroides).